A 349-amino-acid chain; its full sequence is Transmembrane protein 59-like (349 aa).

The N-terminal stretch at 1-22 is a signal peptide; sequence MDSVALMPLLLLLLLQPPPATP. Asn-100 carries an N-linked (GlcNAc...) asparagine glycan. A helical membrane pass occupies residues 276–296; that stretch reads ILACCLFLSVLVMLWLSCSTL. The Microbody targeting signal signature appears at 347-349; that stretch reads TKL.

It belongs to the TMEM59 family.

It localises to the golgi apparatus membrane. Functionally, modulates the O-glycosylation and complex N-glycosylation steps occurring during the Golgi maturation of APP. Inhibits APP transport to the cell surface and further shedding. The polypeptide is Transmembrane protein 59-like (TMEM59L) (Bos taurus (Bovine)).